The chain runs to 130 residues: Transcription antitermination protein NusB (130 aa).

Belongs to the NusB family.

Involved in transcription antitermination. Required for transcription of ribosomal RNA (rRNA) genes. Binds specifically to the boxA antiterminator sequence of the ribosomal RNA (rrn) operons. The polypeptide is Transcription antitermination protein NusB (Bacillus cereus (strain ATCC 10987 / NRS 248)).